A 197-amino-acid polypeptide reads, in one-letter code: Large ribosomal subunit protein uL5 (197 aa).

It belongs to the universal ribosomal protein uL5 family. Part of the 50S ribosomal subunit; contacts the 5S rRNA and probably tRNA. Forms a bridge to the 30S subunit in the 70S ribosome.

This is one of the proteins that bind and probably mediate the attachment of the 5S RNA into the large ribosomal subunit, where it forms part of the central protuberance. In the 70S ribosome it contacts protein S13 of the 30S subunit (bridge B1b), connecting the 2 subunits; this bridge is implicated in subunit movement. May contact the P site tRNA; the 5S rRNA and some of its associated proteins might help stabilize positioning of ribosome-bound tRNAs. In Caldivirga maquilingensis (strain ATCC 700844 / DSM 13496 / JCM 10307 / IC-167), this protein is Large ribosomal subunit protein uL5.